Here is a 272-residue protein sequence, read N- to C-terminus: MSDQSARPIGLFDSGIGGMTVLREVRRLLPGENLLYLADQARCPYGSRSPDELRAIAAACAAWLIARGAKLVVVACNTASAAALADLRRRFPAIPFVGMVPPVKPAASRTRSGVVGVLATPATLAGDLLHDVISRWAEGVHVIEQACPGLVEQIEEGALDSPETMALLRGYVTPLLDAGADTIVLGCTHYPLLVPQLRAIAGDDTLILDAAPAVAQRVAQIVQERGLMRNVNTLSGAITCATTGDPERFANLIHRLDLPCDRVEQAVITIDA.

Substrate is bound by residues Asp13 to Ser14 and Tyr45 to Gly46. Cys76 acts as the Proton donor/acceptor in catalysis. A substrate-binding site is contributed by Asn77–Thr78. The active-site Proton donor/acceptor is Cys187. Thr188–His189 is a binding site for substrate.

This sequence belongs to the aspartate/glutamate racemases family.

It catalyses the reaction L-glutamate = D-glutamate. The protein operates within cell wall biogenesis; peptidoglycan biosynthesis. In terms of biological role, provides the (R)-glutamate required for cell wall biosynthesis. The polypeptide is Glutamate racemase (Roseiflexus sp. (strain RS-1)).